Reading from the N-terminus, the 392-residue chain is DNA replication and repair protein RecF (392 aa).

30 to 37 (GRNGFGKT) contributes to the ATP binding site.

This sequence belongs to the RecF family.

It localises to the cytoplasm. Functionally, the RecF protein is involved in DNA metabolism; it is required for DNA replication and normal SOS inducibility. RecF binds preferentially to single-stranded, linear DNA. It also seems to bind ATP. This is DNA replication and repair protein RecF from Corynebacterium aurimucosum (strain ATCC 700975 / DSM 44827 / CIP 107346 / CN-1) (Corynebacterium nigricans).